The following is a 150-amino-acid chain: 3-hydroxyacyl-[acyl-carrier-protein] dehydratase FabZ (150 aa).

His54 is an active-site residue.

This sequence belongs to the thioester dehydratase family. FabZ subfamily.

It localises to the cytoplasm. The enzyme catalyses a (3R)-hydroxyacyl-[ACP] = a (2E)-enoyl-[ACP] + H2O. Its function is as follows. Involved in unsaturated fatty acids biosynthesis. Catalyzes the dehydration of short chain beta-hydroxyacyl-ACPs and long chain saturated and unsaturated beta-hydroxyacyl-ACPs. This chain is 3-hydroxyacyl-[acyl-carrier-protein] dehydratase FabZ, found in Vibrio campbellii (strain ATCC BAA-1116).